The sequence spans 88 residues: Small ribosomal subunit protein bS20 (88 aa).

The interval 1–27 (MANIKSQIKRNKTNEKARLRNKAVKSS) is disordered.

Belongs to the bacterial ribosomal protein bS20 family.

In terms of biological role, binds directly to 16S ribosomal RNA. This chain is Small ribosomal subunit protein bS20, found in Streptomyces griseus subsp. griseus (strain JCM 4626 / CBS 651.72 / NBRC 13350 / KCC S-0626 / ISP 5235).